Consider the following 87-residue polypeptide: Small ribosomal subunit protein bS20 (87 aa).

Positions 1-26 (MANIKSAKKRAVQSEKARKHNASRRS) are disordered.

This sequence belongs to the bacterial ribosomal protein bS20 family.

Its function is as follows. Binds directly to 16S ribosomal RNA. The protein is Small ribosomal subunit protein bS20 of Enterobacter sp. (strain 638).